A 350-amino-acid chain; its full sequence is Kievitone hydratase (350 aa).

An N-terminal signal peptide occupies residues 1–19; it reads MMISSVLVAGVVAVSAALA.

As to quaternary structure, homodimer. In terms of processing, glycosylated.

The protein localises to the secreted. It catalyses the reaction kievitone hydrate = kievitone + H2O. Its function is as follows. Converts fungitoxic kievitone to the less toxic kievitone hydrate, and thereby protects the pathogenic fungus against this phytoalexin. The chain is Kievitone hydratase (khs) from Fusarium solani subsp. phaseoli (Nectria haematococca).